Reading from the N-terminus, the 2548-residue chain is Unconventional myosin-IXa (2548 aa).

The 99-residue stretch at 14 to 112 (NEHTLRIYPG…YRFLLREKNL (99 aa)) folds into the Ras-associating domain. Residues 146–1016 (KDFDDLCSLP…ERQHLQDLLH (871 aa)) enclose the Myosin motor domain. The helical transmembrane segment at 175–195 (IYTYVGSILIVINPFKFLPIY) threads the bilayer. An ATP-binding site is contributed by 239–246 (GESGSGKT). Serine 755 is modified (phosphoserine). The segment at 898 to 920 (LSKLMETLGQAEPYFVKCIRSNA) is actin-binding. IQ domains follow at residues 1021–1041 (RRII…HFLH), 1042–1071 (LRQA…QKDA), 1074–1103 (MASA…AAIV), 1115–1144 (RHMA…KIIL), and 1138–1167 (QRKK…QRLR). A neck or regulatory domain region spans residues 1021–1162 (RRIILLQRWF…RARQRFKALK (142 aa)). The tract at residues 1163–2511 (EQRLRETKPE…LKNVKNSPQK (1349 aa)) is tail. Over residues 1223–1236 (SVDCLKESPNKQQE) the composition is skewed to basic and acidic residues. A disordered region spans residues 1223 to 1250 (SVDCLKESPNKQQERAQSQSGVDLQEDV). Phosphoserine is present on residues serine 1242 and serine 1258. Positions 1264 to 1291 (QKKVGRAKRESRRMRELEQAIFSLELLK) form a coiled coil. Residues serine 1299 and serine 1317 each carry the phosphoserine modification. Residues 1299 to 1386 (SPSEDRRWST…SNETSSAEHL (88 aa)) form a disordered region. Composition is skewed to low complexity over residues 1324 to 1337 (SESS…LSYE) and 1356 to 1366 (FPSPKISSSPK). Serine 1364 is subject to Phosphoserine. Polar residues predominate over residues 1372 to 1381 (NALSASNETS). Residues 1486-1532 (VLKKLEKLNTEKEERQKQLQQQNEKEMMEQIRQQTDILEKERKAFKT) are a coiled coil. Residues 1804 to 1836 (YHPTPPLSPELPGSCRKEFKENKEPSPKAKRKR) form a disordered region. Basic and acidic residues predominate over residues 1818–1830 (CRKEFKENKEPSP). Serine 1948 is subject to Phosphoserine. 2 consecutive Phorbol-ester/DAG-type zinc fingers follow at residues 1999-2048 (GHIF…TAKC) and 2068-2119 (LTSE…DAES). Residues 2063 to 2251 (VELSRLTSED…LIVVEQMNKY (189 aa)) enclose the Rho-GAP domain. Serine 2294 is modified (phosphoserine). The stretch at 2315-2358 (AAMETDITEQQQAAMQQEERVLTEQIENLQKEKEELTFEMLVLE) forms a coiled coil. Disordered stretches follow at residues 2359 to 2383 (PRAS…ENLN) and 2401 to 2424 (SSLK…KQQD). Serine 2464 is subject to Phosphoserine. The segment at 2490 to 2531 (RGTFNPEKGKQKLKNVKNSPQKTKETPEGTVMSGRRKTVDPD) is disordered.

Belongs to the TRAFAC class myosin-kinesin ATPase superfamily. Myosin family. Post-translationally, phosphorylated by ALPK1 following monosodium urate monohydrate (MSU)-induced inflammation. As to expression, found to be expressed in testis and placenta and at lower levels in all the examined tissues with the exception of liver. Isoform 5: Found in leukocytes but not in brain, retina or testis.

Its subcellular location is the membrane. The protein localises to the cytoplasm. It is found in the synapse. It localises to the cell projection. The protein resides in the growth cone. Its function is as follows. Myosins are actin-based motor molecules with ATPase activity. Unconventional myosins serve in intracellular movements. Regulates Rho by stimulating it's GTPase activity in neurons. Required for the regulation of neurite branching and motor neuron axon guidance. This Homo sapiens (Human) protein is Unconventional myosin-IXa (MYO9A).